We begin with the raw amino-acid sequence, 1021 residues long: Replication factor C subunit 1 (1021 aa).

Disordered stretches follow at residues 1-259 (MSSD…EGAP) and 339-392 (PAKA…GSAS). The span at 90–110 (KVSDELEDDMKPLPAKEVHKE) shows a compositional bias: basic and acidic residues. Basic residues predominate over residues 123–138 (SKRKTPVKPPPSKKLK). Over residues 197-207 (LDDDGEEDKMD) the composition is skewed to acidic residues. Gly residues predominate over residues 219–236 (RGRGGASGGRGRGGGGRG). Basic and acidic residues-rich tracts occupy residues 241–255 (GERKDPPHKGEKEVP) and 347–357 (HQSDKNSEKQQ). The 91-residue stretch at 257–347 (GAPDCLTGLT…KPAKATVAKH (91 aa)) folds into the BRCT domain. Residues 374-392 (NQITTGKNISPKSNKGSAS) show a composition bias toward polar residues. 465–472 (SGPPGIGK) lines the ATP pocket. A disordered region spans residues 931–1021 (VGESLPEENG…AGGSGGKRKR (91 aa)). Acidic residues predominate over residues 945 to 958 (EGDEEDSSDAENND). Residues 965-977 (TKPKLDLQSDKKK) show a composition bias toward basic and acidic residues. The segment covering 999-1010 (AGRSKASGSAGK) has biased composition (low complexity). Positions 1011-1021 (AAGGSGGKRKR) are enriched in gly residues.

This sequence belongs to the activator 1 large subunit family. As to quaternary structure, heterotetramer of subunits RFC2, RFC3, RFC4 and RFC5 that can form a complex with RFC1. In terms of tissue distribution, expressed in roots, leaves, shoot apical meristem (SAM), flag leaves and panicles.

The protein resides in the nucleus. Its function is as follows. May be involved in DNA replication and thus regulate cell proliferation. This Oryza sativa subsp. japonica (Rice) protein is Replication factor C subunit 1 (RFC1).